Here is a 546-residue protein sequence, read N- to C-terminus: Sulfite oxidase, mitochondrial (546 aa).

A mitochondrion-targeting transit peptide spans 1 to 80 (MLPRLYRSVA…YHDHRCRASQ (80 aa)). Positions 83–162 (PRIYSKEDVR…LAEYKIGELN (80 aa)) constitute a Cytochrome b5 heme-binding domain. Position 119 (His-119) interacts with heme b. Ser-124 carries the phosphoserine modification. 3 residues coordinate heme b: His-144, Gln-146, and His-148. Residues 166 to 175 (RMSPPLEASD) are hinge. Positions 176-402 (PYSNDPMRHP…YSHWQRRDYK (227 aa)) are moco domain. Mo-molybdopterin is bound by residues 216-220 (FTRNH), Cys-265, Asp-323, His-362, Arg-367, and 378-380 (HVK). A homodimerization region spans residues 403–539 (GFSPSVDWDT…RGVLSNAWHR (137 aa)).

Homodimer. Heme b is required as a cofactor. Mo-molybdopterin serves as cofactor.

It localises to the mitochondrion intermembrane space. The catalysed reaction is sulfite + O2 + H2O = sulfate + H2O2. Its pathway is energy metabolism; sulfur metabolism. In terms of biological role, catalyzes the oxidation of sulfite to sulfate, the terminal reaction in the oxidative degradation of sulfur-containing amino acids. The chain is Sulfite oxidase, mitochondrial from Rattus norvegicus (Rat).